Reading from the N-terminus, the 243-residue chain is UPF0758 protein sll0766 (243 aa).

Residues 113-235 (VVDSPEAAAI…HQSLRQCTDL (123 aa)) form the MPN domain. The Zn(2+) site is built by histidine 184, histidine 186, and aspartate 197. The JAMM motif signature appears at 184–197 (HNHPSGGLEPSPED).

The protein belongs to the UPF0758 family.

This chain is UPF0758 protein sll0766, found in Synechocystis sp. (strain ATCC 27184 / PCC 6803 / Kazusa).